Consider the following 439-residue polypeptide: Adenylosuccinate synthetase (439 aa).

Residues 14 to 20 (GDEGKGK) and 42 to 44 (GHT) contribute to the GTP site. Asp-15 (proton acceptor) is an active-site residue. The Mg(2+) site is built by Asp-15 and Gly-42. Residues 15–18 (DEGK), 40–43 (NAGH), Thr-130, Arg-144, Gln-225, Thr-240, and Arg-304 contribute to the IMP site. The active-site Proton donor is His-43. 300 to 306 (TTTGRRR) lines the substrate pocket. GTP is bound by residues Arg-306, 332–334 (KLD), and 414–416 (SLG).

The protein belongs to the adenylosuccinate synthetase family. In terms of assembly, homodimer. The cofactor is Mg(2+).

The protein localises to the cytoplasm. It catalyses the reaction IMP + L-aspartate + GTP = N(6)-(1,2-dicarboxyethyl)-AMP + GDP + phosphate + 2 H(+). It participates in purine metabolism; AMP biosynthesis via de novo pathway; AMP from IMP: step 1/2. Functionally, plays an important role in the de novo pathway of purine nucleotide biosynthesis. Catalyzes the first committed step in the biosynthesis of AMP from IMP. This is Adenylosuccinate synthetase from Synechococcus sp. (strain CC9902).